Here is a 294-residue protein sequence, read N- to C-terminus: 4-hydroxy-tetrahydrodipicolinate synthase (294 aa).

Threonine 47 provides a ligand contact to pyruvate. The active-site Proton donor/acceptor is tyrosine 135. Lysine 163 acts as the Schiff-base intermediate with substrate in catalysis. Threonine 205 contributes to the pyruvate binding site.

It belongs to the DapA family. As to quaternary structure, homotetramer; dimer of dimers.

The protein localises to the cytoplasm. The enzyme catalyses L-aspartate 4-semialdehyde + pyruvate = (2S,4S)-4-hydroxy-2,3,4,5-tetrahydrodipicolinate + H2O + H(+). The protein operates within amino-acid biosynthesis; L-lysine biosynthesis via DAP pathway; (S)-tetrahydrodipicolinate from L-aspartate: step 3/4. Catalyzes the condensation of (S)-aspartate-beta-semialdehyde [(S)-ASA] and pyruvate to 4-hydroxy-tetrahydrodipicolinate (HTPA). The sequence is that of 4-hydroxy-tetrahydrodipicolinate synthase from Rickettsia felis (strain ATCC VR-1525 / URRWXCal2) (Rickettsia azadi).